The following is a 290-amino-acid chain: Acetyl-coenzyme A carboxylase carboxyl transferase subunit beta (290 aa).

Positions 28–290 constitute a CoA carboxyltransferase N-terminal domain; that stretch reads IMTKCPKCKK…TGGEYEWLQD (263 aa). Cysteine 32, cysteine 35, cysteine 51, and cysteine 54 together coordinate Zn(2+). A C4-type zinc finger spans residues 32 to 54; it reads CPKCKKIMLTKELDKNLRVCMNC.

Belongs to the AccD/PCCB family. Acetyl-CoA carboxylase is a heterohexamer composed of biotin carboxyl carrier protein (AccB), biotin carboxylase (AccC) and two subunits each of ACCase subunit alpha (AccA) and ACCase subunit beta (AccD). Zn(2+) is required as a cofactor.

Its subcellular location is the cytoplasm. The catalysed reaction is N(6)-carboxybiotinyl-L-lysyl-[protein] + acetyl-CoA = N(6)-biotinyl-L-lysyl-[protein] + malonyl-CoA. It participates in lipid metabolism; malonyl-CoA biosynthesis; malonyl-CoA from acetyl-CoA: step 1/1. Its function is as follows. Component of the acetyl coenzyme A carboxylase (ACC) complex. Biotin carboxylase (BC) catalyzes the carboxylation of biotin on its carrier protein (BCCP) and then the CO(2) group is transferred by the transcarboxylase to acetyl-CoA to form malonyl-CoA. The chain is Acetyl-coenzyme A carboxylase carboxyl transferase subunit beta from Bacillus velezensis (strain DSM 23117 / BGSC 10A6 / LMG 26770 / FZB42) (Bacillus amyloliquefaciens subsp. plantarum).